Reading from the N-terminus, the 724-residue chain is Propionyl-CoA carboxylase alpha chain, mitochondrial (724 aa).

The Biotin carboxylation domain occupies 48 to 495 (KFDKILIANR…TTKYLPEVYP (448 aa)). ATP is bound by residues lysine 163, 195–256 (SRDI…PRHI), glutamate 247, and asparagine 282. In terms of domain architecture, ATP-grasp spans 167 to 364 (KKIATAARVS…IVQQMLRVSY (198 aa)). Glutamate 322, glutamate 335, and asparagine 337 together coordinate Mg(2+). Positions 322, 335, and 337 each coordinate Mn(2+). The active site involves arginine 339. A biotin-binding site is contributed by phenylalanine 395. The 76-residue stretch at 649-724 (KAKVDLSTVV…DEGEVLVELE (76 aa)) folds into the Biotinyl-binding domain. Lysine 690 is subject to N6-biotinyllysine.

The holoenzyme is a dodecamer composed of 6 alpha subunits and 6 beta subunits. Interacts with sir-2.2 and sir-2.3. Biotin is required as a cofactor. Mg(2+) serves as cofactor. It depends on Mn(2+) as a cofactor. Post-translationally, the biotin cofactor is covalently attached to the C-terminal biotinyl-binding domain and is required for the catalytic activity.

It localises to the mitochondrion matrix. The catalysed reaction is propanoyl-CoA + hydrogencarbonate + ATP = (S)-methylmalonyl-CoA + ADP + phosphate + H(+). It carries out the reaction butanoyl-CoA + hydrogencarbonate + ATP = (2S)-ethylmalonyl-CoA + ADP + phosphate + H(+). It functions in the pathway metabolic intermediate metabolism; propanoyl-CoA degradation; succinyl-CoA from propanoyl-CoA: step 1/3. Its function is as follows. This is one of the 2 subunits of the biotin-dependent propionyl-CoA carboxylase (PCC), a mitochondrial enzyme involved in the catabolism of odd chain fatty acids, branched-chain amino acids isoleucine, threonine, methionine, and valine and other metabolites. Propionyl-CoA carboxylase catalyzes the carboxylation of propionyl-CoA/propanoyl-CoA to D-methylmalonyl-CoA/(S)-methylmalonyl-CoA. Within the holoenzyme, the alpha subunit catalyzes the ATP-dependent carboxylation of the biotin carried by the biotin carboxyl carrier (BCC) domain, while the beta subunit then transfers the carboxyl group from carboxylated biotin to propionyl-CoA. Propionyl-CoA carboxylase also significantly acts on butyryl-CoA/butanoyl-CoA, which is converted to ethylmalonyl-CoA/(2S)-ethylmalonyl-CoA. Other alternative minor substrates include (2E)-butenoyl-CoA/crotonoyl-CoA. The sequence is that of Propionyl-CoA carboxylase alpha chain, mitochondrial (pcca-1) from Caenorhabditis elegans.